The sequence spans 73 residues: Large ribosomal subunit protein bL28 (73 aa).

It belongs to the bacterial ribosomal protein bL28 family.

The polypeptide is Large ribosomal subunit protein bL28 (Buchnera aphidicola subsp. Cinara cedri (strain Cc)).